The sequence spans 340 residues: GTP 3',8-cyclase (340 aa).

A Radical SAM core domain is found at Lys8–Asp227. Arg17 contacts GTP. [4Fe-4S] cluster-binding residues include Cys24 and Cys28. Tyr30 provides a ligand contact to S-adenosyl-L-methionine. Cys31 is a binding site for [4Fe-4S] cluster. Arg71 serves as a coordination point for GTP. Gly75 serves as a coordination point for S-adenosyl-L-methionine. Thr102 is a binding site for GTP. Ser126 is an S-adenosyl-L-methionine binding site. Lys163 is a GTP binding site. Residue Met197 coordinates S-adenosyl-L-methionine. Cys261 and Cys264 together coordinate [4Fe-4S] cluster. Arg266–Arg268 provides a ligand contact to GTP. Cys278 is a [4Fe-4S] cluster binding site.

This sequence belongs to the radical SAM superfamily. MoaA family. In terms of assembly, monomer and homodimer. [4Fe-4S] cluster serves as cofactor.

It catalyses the reaction GTP + AH2 + S-adenosyl-L-methionine = (8S)-3',8-cyclo-7,8-dihydroguanosine 5'-triphosphate + 5'-deoxyadenosine + L-methionine + A + H(+). It participates in cofactor biosynthesis; molybdopterin biosynthesis. Functionally, catalyzes the cyclization of GTP to (8S)-3',8-cyclo-7,8-dihydroguanosine 5'-triphosphate. The chain is GTP 3',8-cyclase from Staphylococcus aureus (strain USA300).